A 410-amino-acid polypeptide reads, in one-letter code: Dipeptidase 1 (410 aa).

The first 16 residues, 1–16 (MWTSWWLWPLVAVCTA), serve as a signal peptide directing secretion. Zn(2+)-binding residues include His-36 and Asp-38. Asn-57 carries N-linked (GlcNAc...) asparagine glycosylation. A disulfide bond links Cys-87 and Cys-170. Glu-141 is a Zn(2+) binding site. His-168 serves as a coordination point for substrate. 2 residues coordinate Zn(2+): His-214 and His-235. A disulfide bridge links Cys-242 with Cys-274. Residues Arg-246 and Asp-304 each contribute to the substrate site. The GPI-anchor amidated serine moiety is linked to residue Ser-384. The propeptide at 385–410 (EAPSLHRRPGALLASLSLLLLSLGLL) is removed in mature form.

It belongs to the metallo-dependent hydrolases superfamily. Peptidase M19 family. Homodimer; disulfide-linked. Requires Zn(2+) as cofactor.

It localises to the apical cell membrane. The protein resides in the cell projection. The protein localises to the microvillus membrane. It catalyses the reaction an L-aminoacyl-L-amino acid + H2O = 2 an L-alpha-amino acid. The catalysed reaction is leukotriene D4 + H2O = leukotriene E4 + glycine. It carries out the reaction L-cystine-bis-glycine + 2 H2O = L-cystine + 2 glycine. The enzyme catalyses a beta-lactam + H2O = a substituted beta-amino acid. It catalyses the reaction glycyldehydrophenylalanine + H2O = 2,3-didehydrophenylalanine + glycine. Its activity is regulated as follows. Inhibited by L-penicillamine. Beta-lactamase activity is inhibited by cilastatin. In terms of biological role, hydrolyzes a wide range of dipeptides including the conversion of leukotriene D4 to leukotriene E4. Hydrolyzes cystinyl-bis-glycine (cys-bis-gly) formed during glutathione degradation. Also possesses beta lactamase activity and hydrolytically inactivates beta-lactam antibiotics. Functionally, independently of its dipeptidase activity, acts as an adhesion receptor for neutrophil recruitment from bloodstream into inflamed lungs and liver. This is Dipeptidase 1 (DPEP1) from Oryctolagus cuniculus (Rabbit).